The following is a 156-amino-acid chain: Cellulose synthase operon protein D (156 aa).

It functions in the pathway glycan metabolism; bacterial cellulose biosynthesis. Functionally, may have a major role in the perfection of crystallization, involved either in the pore structure itself or in the organization of the pores within the linear array of terminal synthesizing complexes (TCs). The sequence is that of Cellulose synthase operon protein D (acsD) from Komagataeibacter xylinus (Gluconacetobacter xylinus).